The chain runs to 445 residues: NADH-quinone oxidoreductase subunit F (445 aa).

61-70 (GRGGAGFSTG) is a binding site for NAD(+). Residue 174–221 (GAGRYICGEETALINSLEGRRANPRSKPPFPATSGVWGKPTCVNNVET) coordinates FMN. [4Fe-4S] cluster is bound by residues Cys-351, Cys-354, Cys-357, and Cys-398.

The protein belongs to the complex I 51 kDa subunit family. In terms of assembly, composed of 13 different subunits. Subunits NuoCD, E, F, and G constitute the peripheral sector of the complex. FMN serves as cofactor. The cofactor is [4Fe-4S] cluster.

The enzyme catalyses a quinone + NADH + 5 H(+)(in) = a quinol + NAD(+) + 4 H(+)(out). Functionally, NDH-1 shuttles electrons from NADH, via FMN and iron-sulfur (Fe-S) centers, to quinones in the respiratory chain. The immediate electron acceptor for the enzyme in this species is believed to be ubiquinone. Couples the redox reaction to proton translocation (for every two electrons transferred, four hydrogen ions are translocated across the cytoplasmic membrane), and thus conserves the redox energy in a proton gradient. In Salmonella typhimurium (strain LT2 / SGSC1412 / ATCC 700720), this protein is NADH-quinone oxidoreductase subunit F (nuoF).